The primary structure comprises 516 residues: Citrate synthase, glyoxysomal (516 aa).

A glyoxysome-targeting transit peptide spans 1-43 (MPTDMELSPSNVARHRLAVLAAHLSAASLEPPVMASSLEAHCV). Active-site residues include H329, H368, and D424.

Belongs to the citrate synthase family.

The protein resides in the glyoxysome. The catalysed reaction is oxaloacetate + acetyl-CoA + H2O = citrate + CoA + H(+). The protein operates within carbohydrate metabolism; glyoxylate cycle; isocitrate from oxaloacetate: step 1/2. The protein is Citrate synthase, glyoxysomal of Cucurbita maxima (Pumpkin).